Here is a 311-residue protein sequence, read N- to C-terminus: Mitochondrial arginine transporter BAC1 (311 aa).

Solcar repeat units follow at residues 12-101 (FGFY…AKLF), 111-203 (PRPE…LRYH), and 219-305 (VDMG…SMKM). 6 helical membrane-spanning segments follow: residues 18-38 (YVAG…FDTV), 76-96 (GATS…GIYS), 113-133 (PEII…VLCP), 178-197 (GGSA…FTVY), 222-242 (GIGV…VLPF), and 288-308 (AFPA…MLGI).

It belongs to the mitochondrial carrier (TC 2.A.29) family. High expression in flowers and siliques. Lower expression in leaves and stems.

The protein localises to the mitochondrion inner membrane. With respect to regulation, inhibited by mercuric chloride. Mitochondrial arginine transporter that catalyzes the counter-exchange of arginine with lysine, ornithine, arginine and histidine. Substrate preference in reconstituted proteoliposomes is arginine &gt; lysine &gt; ornithine &gt; histidine. May be involved in the delivery of arginine, released from seed reserves, to mitochondrial arginase and the export of ornithine. The polypeptide is Mitochondrial arginine transporter BAC1 (BAC1) (Arabidopsis thaliana (Mouse-ear cress)).